Reading from the N-terminus, the 181-residue chain is Large ribosomal subunit protein eL18 (181 aa).

The disordered stretch occupies residues 152 to 181 (WGKAPGQRGSHSAPYVRSEGRKFERAHGLK). Positions 169 to 181 (SEGRKFERAHGLK) are enriched in basic and acidic residues.

It belongs to the eukaryotic ribosomal protein eL18 family.

The protein localises to the cytoplasm. The chain is Large ribosomal subunit protein eL18 (RPL18) from Tetrahymena thermophila.